Here is a 336-residue protein sequence, read N- to C-terminus: Holliday junction branch migration complex subunit RuvB (336 aa).

A large ATPase domain (RuvB-L) region spans residues 4–184; sequence ADRLISAGAT…FGIVQRLEFY (181 aa). ATP contacts are provided by residues isoleucine 23, arginine 24, glycine 65, lysine 68, threonine 69, threonine 70, 131–133, arginine 174, tyrosine 184, and arginine 221; that span reads EDY. Threonine 69 is a Mg(2+) binding site. The small ATPAse domain (RuvB-S) stretch occupies residues 185-255; it reads QVPDLQHIVG…IAAQALDMLN (71 aa). A head domain (RuvB-H) region spans residues 258–336; sequence AEGFDYMDRK…HFGITPPEMP (79 aa). DNA is bound by residues arginine 294, arginine 313, and arginine 318.

Belongs to the RuvB family. In terms of assembly, homohexamer. Forms an RuvA(8)-RuvB(12)-Holliday junction (HJ) complex. HJ DNA is sandwiched between 2 RuvA tetramers; dsDNA enters through RuvA and exits via RuvB. An RuvB hexamer assembles on each DNA strand where it exits the tetramer. Each RuvB hexamer is contacted by two RuvA subunits (via domain III) on 2 adjacent RuvB subunits; this complex drives branch migration. In the full resolvosome a probable DNA-RuvA(4)-RuvB(12)-RuvC(2) complex forms which resolves the HJ.

The protein resides in the cytoplasm. The enzyme catalyses ATP + H2O = ADP + phosphate + H(+). Its function is as follows. The RuvA-RuvB-RuvC complex processes Holliday junction (HJ) DNA during genetic recombination and DNA repair, while the RuvA-RuvB complex plays an important role in the rescue of blocked DNA replication forks via replication fork reversal (RFR). RuvA specifically binds to HJ cruciform DNA, conferring on it an open structure. The RuvB hexamer acts as an ATP-dependent pump, pulling dsDNA into and through the RuvAB complex. RuvB forms 2 homohexamers on either side of HJ DNA bound by 1 or 2 RuvA tetramers; 4 subunits per hexamer contact DNA at a time. Coordinated motions by a converter formed by DNA-disengaged RuvB subunits stimulates ATP hydrolysis and nucleotide exchange. Immobilization of the converter enables RuvB to convert the ATP-contained energy into a lever motion, pulling 2 nucleotides of DNA out of the RuvA tetramer per ATP hydrolyzed, thus driving DNA branch migration. The RuvB motors rotate together with the DNA substrate, which together with the progressing nucleotide cycle form the mechanistic basis for DNA recombination by continuous HJ branch migration. Branch migration allows RuvC to scan DNA until it finds its consensus sequence, where it cleaves and resolves cruciform DNA. This Salmonella arizonae (strain ATCC BAA-731 / CDC346-86 / RSK2980) protein is Holliday junction branch migration complex subunit RuvB.